The primary structure comprises 178 residues: Transcription antitermination protein NusB (178 aa).

The protein belongs to the NusB family.

Involved in transcription antitermination. Required for transcription of ribosomal RNA (rRNA) genes. Binds specifically to the boxA antiterminator sequence of the ribosomal RNA (rrn) operons. The polypeptide is Transcription antitermination protein NusB (Alkalilimnicola ehrlichii (strain ATCC BAA-1101 / DSM 17681 / MLHE-1)).